The primary structure comprises 327 residues: Transaldolase (327 aa).

Lys132 (schiff-base intermediate with substrate) is an active-site residue.

Belongs to the transaldolase family. Type 1 subfamily.

It is found in the cytoplasm. The catalysed reaction is D-sedoheptulose 7-phosphate + D-glyceraldehyde 3-phosphate = D-erythrose 4-phosphate + beta-D-fructose 6-phosphate. The protein operates within carbohydrate degradation; pentose phosphate pathway; D-glyceraldehyde 3-phosphate and beta-D-fructose 6-phosphate from D-ribose 5-phosphate and D-xylulose 5-phosphate (non-oxidative stage): step 2/3. In terms of biological role, transaldolase is important for the balance of metabolites in the pentose-phosphate pathway. The chain is Transaldolase from Chlamydia muridarum (strain MoPn / Nigg).